The sequence spans 257 residues: MRYALGVEYDGSEFQGWQQLGEHGGPSVQATLQAALSSVADAPIQVVCAGRTDAGVHGECQVVHFDSDARREPRGWMLGTTARLPPSVAVRWCVPAAEDFHARFSARARRYRYRLLNRQIRPALYRQTLSWERRPLDAQAMHTAAQALLGENDFGAFRSVQCQALHARRNLQAITVQRLGEVVEVQVQANAFLHHMVRNIVGSLILVGTGEQPIDWIATLLAGRDRTVAGPTAPPQGLVFIGPLYPAEWHLPAEVTQ.

Residue Asp53 is the Nucleophile of the active site. Tyr111 contacts substrate.

It belongs to the tRNA pseudouridine synthase TruA family. Homodimer.

It carries out the reaction uridine(38/39/40) in tRNA = pseudouridine(38/39/40) in tRNA. Its function is as follows. Formation of pseudouridine at positions 38, 39 and 40 in the anticodon stem and loop of transfer RNAs. This Xanthomonas campestris pv. campestris (strain 8004) protein is tRNA pseudouridine synthase A.